The sequence spans 486 residues: UDP-N-acetylmuramate--L-alanine ligase (486 aa).

129–135 contributes to the ATP binding site; sequence GTHGKTT.

Belongs to the MurCDEF family.

It localises to the cytoplasm. The enzyme catalyses UDP-N-acetyl-alpha-D-muramate + L-alanine + ATP = UDP-N-acetyl-alpha-D-muramoyl-L-alanine + ADP + phosphate + H(+). Its pathway is cell wall biogenesis; peptidoglycan biosynthesis. Cell wall formation. The sequence is that of UDP-N-acetylmuramate--L-alanine ligase from Vibrio vulnificus (strain YJ016).